The sequence spans 130 residues: Putative pre-16S rRNA nuclease (130 aa).

It belongs to the YqgF nuclease family.

It is found in the cytoplasm. Could be a nuclease involved in processing of the 5'-end of pre-16S rRNA. The protein is Putative pre-16S rRNA nuclease of Buchnera aphidicola subsp. Cinara cedri (strain Cc).